A 441-amino-acid polypeptide reads, in one-letter code: Probable membrane metalloprotease ARASP2, chloroplastic (441 aa).

The N-terminal 84 residues, 1–84 (MLLNISSSPI…DFGSLESVLE (84 aa)), are a transit peptide targeting the chloroplast. His-96 lines the Zn(2+) pocket. Glu-97 is an active-site residue. Position 100 (His-100) interacts with Zn(2+). A helical membrane pass occupies residues 171–191 (VIVVSAGIVANVIFAYAIIFT). The PDZ domain occupies 196-249 (VGLPVQESFPGVLVPDVKSFSAASRDGLLPGDVILAVDGTELSNSGSDSVSKVV). Helical transmembrane passes span 373–393 (LAVI…ALIL) and 407–427 (VEQG…LFLI).

It belongs to the peptidase M50A family. The cofactor is Zn(2+).

The protein localises to the plastid. Its subcellular location is the chloroplast inner membrane. Metalloprotease essential for chloroplast and plant development. May be involved in regulated intramembrane proteolysis (RIP). This Arabidopsis thaliana (Mouse-ear cress) protein is Probable membrane metalloprotease ARASP2, chloroplastic.